A 305-amino-acid polypeptide reads, in one-letter code: Probable L-ribulose-5-phosphate 3-epimerase UlaE (305 aa).

This sequence belongs to the L-ribulose-5-phosphate 3-epimerase family.

It carries out the reaction L-ribulose 5-phosphate = L-xylulose 5-phosphate. Its pathway is cofactor degradation; L-ascorbate degradation; D-xylulose 5-phosphate from L-ascorbate: step 3/4. Functionally, catalyzes the isomerization of L-xylulose-5-phosphate to L-ribulose-5-phosphate. Is involved in the anaerobic L-ascorbate utilization. This is Probable L-ribulose-5-phosphate 3-epimerase UlaE (ulaE) from Mycoplasma pneumoniae (strain ATCC 29342 / M129 / Subtype 1) (Mycoplasmoides pneumoniae).